The sequence spans 233 residues: Purine nucleoside phosphorylase DeoD-type (233 aa).

Position 4 (histidine 4) interacts with a purine D-ribonucleoside. Phosphate is bound by residues glycine 20, arginine 24, arginine 43, and 87 to 90; that span reads RIGT. A purine D-ribonucleoside contacts are provided by residues 179-181 and 203-204; these read EME and SD. Catalysis depends on aspartate 204, which acts as the Proton donor.

It belongs to the PNP/UDP phosphorylase family. Homohexamer; trimer of homodimers.

It catalyses the reaction a purine D-ribonucleoside + phosphate = a purine nucleobase + alpha-D-ribose 1-phosphate. It carries out the reaction a purine 2'-deoxy-D-ribonucleoside + phosphate = a purine nucleobase + 2-deoxy-alpha-D-ribose 1-phosphate. Its function is as follows. Catalyzes the reversible phosphorolytic breakdown of the N-glycosidic bond in the beta-(deoxy)ribonucleoside molecules, with the formation of the corresponding free purine bases and pentose-1-phosphate. The polypeptide is Purine nucleoside phosphorylase DeoD-type (Helicobacter pylori (strain P12)).